Here is a 327-residue protein sequence, read N- to C-terminus: Acetyl-coenzyme A carboxylase carboxyl transferase subunit alpha (327 aa).

The 254-residue stretch at 46–299 folds into the CoA carboxyltransferase C-terminal domain; it reads LEARAIQLRR…RQVLLRHLKD (254 aa).

This sequence belongs to the AccA family. Acetyl-CoA carboxylase is a heterohexamer composed of biotin carboxyl carrier protein (AccB), biotin carboxylase (AccC) and two subunits each of ACCase subunit alpha (AccA) and ACCase subunit beta (AccD).

Its subcellular location is the cytoplasm. The enzyme catalyses N(6)-carboxybiotinyl-L-lysyl-[protein] + acetyl-CoA = N(6)-biotinyl-L-lysyl-[protein] + malonyl-CoA. It participates in lipid metabolism; malonyl-CoA biosynthesis; malonyl-CoA from acetyl-CoA: step 1/1. Functionally, component of the acetyl coenzyme A carboxylase (ACC) complex. First, biotin carboxylase catalyzes the carboxylation of biotin on its carrier protein (BCCP) and then the CO(2) group is transferred by the carboxyltransferase to acetyl-CoA to form malonyl-CoA. The protein is Acetyl-coenzyme A carboxylase carboxyl transferase subunit alpha of Synechococcus elongatus (strain ATCC 33912 / PCC 7942 / FACHB-805) (Anacystis nidulans R2).